Consider the following 154-residue polypeptide: PHA granule-associated protein PhaP (154 aa).

It is found in the cytoplasmic granule. In terms of biological role, polyhydroxyalkanoate (PHA) granule structural protein. Important for PHA granule formation and separation, and for cell growth. This is PHA granule-associated protein PhaP (phaP) from Haloferax mediterranei (strain ATCC 33500 / DSM 1411 / JCM 8866 / NBRC 14739 / NCIMB 2177 / R-4) (Halobacterium mediterranei).